Here is a 752-residue protein sequence, read N- to C-terminus: Exocyst complex component EXO84B (752 aa).

Disordered stretches follow at residues 511 to 532 and 724 to 752; these read QTGQ…NPEQ and TKGN…HGSY. The span at 515 to 532 shows a compositional bias: basic and acidic residues; sequence RTDDLRRPLDRQNRNPEQ. Over residues 733–752 the composition is skewed to low complexity; that stretch reads SPTASVSAQSVSSARSHGSY.

It belongs to the EXO84 family. The exocyst complex is composed of SEC3, SEC5, SEC6, SEC8, SEC10, EXO70A1 and EXO84B. Interacts with SEC6, SEC10, SEC15B and EXO70A1. Interacts with EXO70B1. Binds directly to B1L.

It is found in the cytoplasm. It localises to the cytosol. The protein resides in the perinuclear region. Its subcellular location is the cytoskeleton. The protein localises to the phragmoplast. It is found in the secreted. It localises to the cell wall. The protein resides in the cell membrane. In terms of biological role, component of the exocyst complex involved in the docking of exocytic vesicles with fusion sites on the plasma membrane during regulated or polarized secretion. Involved in polarized cell growth and organ morphogenesis. During cytokinesis, involved in cell plate initiation, cell plate maturation and formation of new primary cell wall. Probable component of an exocyst subcomplex specifically involved in autophagy-related, Golgi-independent membrane traffic to the vacuole. Regulates autophagosome formation and autophagy-related Golgi-independent import into the vacuole. Mediates ABCG36/PEN3 outer-membrane polarity at the periphery of lateral root cap and root epidermal cells. This chain is Exocyst complex component EXO84B, found in Arabidopsis thaliana (Mouse-ear cress).